The chain runs to 245 residues: 1-(5-phosphoribosyl)-5-[(5-phosphoribosylamino)methylideneamino] imidazole-4-carboxamide isomerase (245 aa).

The Proton acceptor role is filled by Asp7. Asp129 serves as the catalytic Proton donor.

Belongs to the HisA/HisF family.

The protein resides in the cytoplasm. The enzyme catalyses 1-(5-phospho-beta-D-ribosyl)-5-[(5-phospho-beta-D-ribosylamino)methylideneamino]imidazole-4-carboxamide = 5-[(5-phospho-1-deoxy-D-ribulos-1-ylimino)methylamino]-1-(5-phospho-beta-D-ribosyl)imidazole-4-carboxamide. It participates in amino-acid biosynthesis; L-histidine biosynthesis; L-histidine from 5-phospho-alpha-D-ribose 1-diphosphate: step 4/9. The chain is 1-(5-phosphoribosyl)-5-[(5-phosphoribosylamino)methylideneamino] imidazole-4-carboxamide isomerase from Pectobacterium atrosepticum (strain SCRI 1043 / ATCC BAA-672) (Erwinia carotovora subsp. atroseptica).